The primary structure comprises 119 residues: Ribosome-binding factor A (119 aa).

It belongs to the RbfA family. Monomer. Binds 30S ribosomal subunits, but not 50S ribosomal subunits or 70S ribosomes.

The protein localises to the cytoplasm. Functionally, one of several proteins that assist in the late maturation steps of the functional core of the 30S ribosomal subunit. Associates with free 30S ribosomal subunits (but not with 30S subunits that are part of 70S ribosomes or polysomes). Required for efficient processing of 16S rRNA. May interact with the 5'-terminal helix region of 16S rRNA. This Citrifermentans bemidjiense (strain ATCC BAA-1014 / DSM 16622 / JCM 12645 / Bem) (Geobacter bemidjiensis) protein is Ribosome-binding factor A.